The chain runs to 396 residues: N-terminal EF-hand calcium-binding protein 3 (396 aa).

A compositionally biased stretch (pro residues) spans 14–34 (PPAPQPQPQTPRHPQLAPDPG). Residues 14 to 36 (PPAPQPQPQTPRHPQLAPDPGPA) are disordered. The region spanning 36–71 (AGHTLFQDVFRRADKNDDGKLSFEEFQNYFADGVLS) is the EF-hand domain. D49, N51, D53, K55, and E60 together coordinate Ca(2+). The interval 181–190 (VEAQSRLCGS) is required for interaction with APBA3. A disordered region spans residues 197–220 (ALRSVSRSSTWSPGSSDTGRSSEA). Polar residues predominate over residues 206–217 (TWSPGSSDTGRS). Residues 296 to 385 (LMAQRQVQVA…RAPDTLTTVF (90 aa)) form the ABM domain.

In terms of assembly, interacts with the N-terminal domain of APBA2. Interacts with NEK2. Interacts with APBA3; APBA3 seems to mediate the interaction between NECAB3 and HIF1AN. In terms of processing, phosphorylated by NEK2. As to expression, strongly expressed in heart and skeletal muscle, moderately in brain and pancreas.

It localises to the golgi apparatus. Its function is as follows. Inhibits the interaction of APBA2 with amyloid-beta precursor protein (APP), and hence allows formation of amyloid-beta. May enhance the activity of HIF1A and thus promote glycolysis under normoxic conditions; the function requires its ABM domain and may implicate the stabilization of the interaction between HIF1AN and APBA3. This is N-terminal EF-hand calcium-binding protein 3 (NECAB3) from Homo sapiens (Human).